We begin with the raw amino-acid sequence, 408 residues long: LL-diaminopimelate aminotransferase (408 aa).

The substrate site is built by Y15 and G42. Pyridoxal 5'-phosphate-binding positions include Y72, 108–109 (SK), Y132, N187, Y218, and 246–248 (SFS). Residues K109, Y132, and N187 each contribute to the substrate site. K249 is modified (N6-(pyridoxal phosphate)lysine). Pyridoxal 5'-phosphate is bound by residues R257 and N292. Positions 292 and 388 each coordinate substrate.

It belongs to the class-I pyridoxal-phosphate-dependent aminotransferase family. LL-diaminopimelate aminotransferase subfamily. As to quaternary structure, homodimer. It depends on pyridoxal 5'-phosphate as a cofactor.

It catalyses the reaction (2S,6S)-2,6-diaminopimelate + 2-oxoglutarate = (S)-2,3,4,5-tetrahydrodipicolinate + L-glutamate + H2O + H(+). The protein operates within amino-acid biosynthesis; L-lysine biosynthesis via DAP pathway; LL-2,6-diaminopimelate from (S)-tetrahydrodipicolinate (aminotransferase route): step 1/1. Functionally, involved in the synthesis of meso-diaminopimelate (m-DAP or DL-DAP), required for both lysine and peptidoglycan biosynthesis. Catalyzes the direct conversion of tetrahydrodipicolinate to LL-diaminopimelate. The polypeptide is LL-diaminopimelate aminotransferase (Prochlorococcus marinus subsp. pastoris (strain CCMP1986 / NIES-2087 / MED4)).